Here is a 256-residue protein sequence, read N- to C-terminus: Type III pantothenate kinase (256 aa).

6–13 is a binding site for ATP; the sequence is DAGNSRIK. Substrate is bound by residues Y90 and 97–100; that span reads GSDR. D99 functions as the Proton acceptor in the catalytic mechanism. T123 is a binding site for ATP. T187 provides a ligand contact to substrate.

The protein belongs to the type III pantothenate kinase family. As to quaternary structure, homodimer. NH4(+) serves as cofactor. Requires K(+) as cofactor.

Its subcellular location is the cytoplasm. It carries out the reaction (R)-pantothenate + ATP = (R)-4'-phosphopantothenate + ADP + H(+). The protein operates within cofactor biosynthesis; coenzyme A biosynthesis; CoA from (R)-pantothenate: step 1/5. Catalyzes the phosphorylation of pantothenate (Pan), the first step in CoA biosynthesis. This chain is Type III pantothenate kinase, found in Burkholderia mallei (strain ATCC 23344).